A 215-amino-acid polypeptide reads, in one-letter code: MNLVLMGLPGAGKGTQAAKIIEDYAIPHISTGDMFRAAIKDQTPLGQEAKSYMDKGELVPDEVTIGIVRERLAKEDCANGFLLDGFPRTVKQADALEVLLADLNKQIDHVVHIGVNPEKLVPRLTGRRICPTCGATYHVIYNPPKVEGVCDIDGSALVQREDDQEETVRRRLEVNVAQAQPLIDFYAEKGYLRNLDGDRPINEVYSDVQALLGGQ.

10–15 contacts ATP; sequence GAGKGT. The tract at residues 30-59 is NMP; it reads STGDMFRAAIKDQTPLGQEAKSYMDKGELV. AMP-binding positions include T31, R36, 57 to 59, 85 to 88, and Q92; these read ELV and GFPR. The LID stretch occupies residues 126 to 163; it reads GRRICPTCGATYHVIYNPPKVEGVCDIDGSALVQREDD. Residue R127 participates in ATP binding. Residues C130 and C133 each coordinate Zn(2+). Residue 136–137 coordinates ATP; sequence TY. 2 residues coordinate Zn(2+): C150 and D153. Positions 160 and 171 each coordinate AMP. Residue R199 participates in ATP binding.

This sequence belongs to the adenylate kinase family. In terms of assembly, monomer.

It localises to the cytoplasm. The enzyme catalyses AMP + ATP = 2 ADP. The protein operates within purine metabolism; AMP biosynthesis via salvage pathway; AMP from ADP: step 1/1. Its function is as follows. Catalyzes the reversible transfer of the terminal phosphate group between ATP and AMP. Plays an important role in cellular energy homeostasis and in adenine nucleotide metabolism. This is Adenylate kinase from Exiguobacterium sibiricum (strain DSM 17290 / CCUG 55495 / CIP 109462 / JCM 13490 / 255-15).